Consider the following 224-residue polypeptide: Heme response regulator HssR (224 aa).

A Response regulatory domain is found at 3 to 116 (QCLVVDDDPR…ELIFRIRAVL (114 aa)). At Asp52 the chain carries 4-aspartylphosphate. The segment at residues 124–222 (NSEMTIGNLT…VRGQGYKVEN (99 aa)) is a DNA-binding region (ompR/PhoB-type).

Phosphorylated by HssS.

Its subcellular location is the cytoplasm. Its function is as follows. Member of the two-component regulatory system HssS/HssR involved in intracellular heme homeostasis and tempering of staphylococcal virulence. Phosphorylated HssR binds to a direct repeat sequence within hrtAB promoter and activates the expression of hrtAB, an efflux pump, in response to extracellular heme, hemin, hemoglobin or blood. In Staphylococcus aureus (strain MRSA252), this protein is Heme response regulator HssR (hssR).